The chain runs to 422 residues: MEDSKPLTVSEVTRILKNLITGSKDLKNIWVRGEISNYSKASSGHIYFSLKDSSSLMRCTFFNYSNKNYSGKPLSDGKEVQVYGTVTLYEAGGSYNLNVARVEELGQGDILLQIEKLKQKLAAEGIFDPERKRRIPSFPKTLGIATSPSGAAIEDIIKIARSRFPGINILISPCFVQGDEAPDSIVAAIEELNHPSWGVDVIIAGRGGGSFEDLMAFNDEKVVRAYANSRIPIISAVGHQTDVLLSDFAADYSTPTPTAAAEYAVPKEEDVLQFLTQLEGRLKTSLLAKISSSKDRLRLLSGKFIFKEPMQLLNQRNQRVDEIGVRLQKAVFNKVGLARVRLERYEDLTSRMRNIFFHKKQKAEFWTTKVEDLSPPATMKRGYSILRNQKGKIIRSPEETKPEEELQVLLSGGTMQVIRKGK.

The protein belongs to the XseA family. As to quaternary structure, heterooligomer composed of large and small subunits.

It is found in the cytoplasm. The catalysed reaction is Exonucleolytic cleavage in either 5'- to 3'- or 3'- to 5'-direction to yield nucleoside 5'-phosphates.. In terms of biological role, bidirectionally degrades single-stranded DNA into large acid-insoluble oligonucleotides, which are then degraded further into small acid-soluble oligonucleotides. The sequence is that of Exodeoxyribonuclease 7 large subunit from Leptospira borgpetersenii serovar Hardjo-bovis (strain JB197).